A 126-amino-acid chain; its full sequence is Small ribosomal subunit protein bS6 (126 aa).

It belongs to the bacterial ribosomal protein bS6 family.

Its function is as follows. Binds together with bS18 to 16S ribosomal RNA. The polypeptide is Small ribosomal subunit protein bS6 (Actinobacillus succinogenes (strain ATCC 55618 / DSM 22257 / CCUG 43843 / 130Z)).